We begin with the raw amino-acid sequence, 437 residues long: UDP-N-acetylmuramate--L-alanine ligase (437 aa).

Residue 114–120 (GTHGKTS) participates in ATP binding.

It belongs to the MurCDEF family.

The protein resides in the cytoplasm. The enzyme catalyses UDP-N-acetyl-alpha-D-muramate + L-alanine + ATP = UDP-N-acetyl-alpha-D-muramoyl-L-alanine + ADP + phosphate + H(+). It participates in cell wall biogenesis; peptidoglycan biosynthesis. Its function is as follows. Cell wall formation. This Lactobacillus gasseri (strain ATCC 33323 / DSM 20243 / BCRC 14619 / CIP 102991 / JCM 1131 / KCTC 3163 / NCIMB 11718 / NCTC 13722 / AM63) protein is UDP-N-acetylmuramate--L-alanine ligase.